The sequence spans 581 residues: Jasmonoyl--L-amino acid synthetase GH3.5 (581 aa).

Ser92 provides a ligand contact to ATP. Ser95 provides a ligand contact to jasmonate. Residues Thr115, Asn161, and 324 to 329 (GASEGW) contribute to the ATP site. 159-163 (TTNLY) lines the an L-alpha-amino acid pocket. Residues 321–324 (ADYG) and Ser326 contribute to the jasmonate site. 534–538 (EILDH) contributes to the an L-alpha-amino acid binding site. ATP is bound at residue Lys561.

Belongs to the IAA-amido conjugating enzyme family. As to expression, expressed in green shoots, roots and flowers.

The enzyme catalyses a jasmonate + an L-alpha-amino acid + ATP = a jasmonyl-L-amino acid + AMP + diphosphate + H(+). Functionally, catalyzes the synthesis of jasmonate-amino acid conjugates by adenylation. Catalyzes the conjugation of jasmonate (JA) to Ile when expressed in a heterologous system (E.coli). Catalyzes in vitro the conjugation of jasmonate (JA) to Ile, Phe, Cys, Leu, Met, Ala, Val and Trp. Involved in the production of JA-Ile in response to infection by the rice blast fungus Magnaporthe oryzae. Required for the accumulation of the flavonoid phytoalexin sakuranetin in response to infection by the rice blast fungus. Involved in herbivory-induced JA-Ile accumulation. Involved in the production of JA-Ile in response to wounding. Required for modulation of light and JA signaling in photomorphogenesis. Required for normal seed development. Required for optimal flower opening and closing and anther dehiscence. May catalyze the synthesis of indole-3-acetic acid (IAA)-amino acid conjugates, providing a mechanism for the plant to cope with the presence of excess auxin. In Oryza sativa subsp. japonica (Rice), this protein is Jasmonoyl--L-amino acid synthetase GH3.5.